The chain runs to 281 residues: Diaminopimelate epimerase (281 aa).

Substrate-binding residues include N14 and N65. Catalysis depends on C74, which acts as the Proton donor. Substrate contacts are provided by residues 75 to 76, N165, N198, and 216 to 217; these read GN and ER. C225 serves as the catalytic Proton acceptor. Residue 226 to 227 coordinates substrate; it reads GT.

It belongs to the diaminopimelate epimerase family. In terms of assembly, homodimer.

It is found in the cytoplasm. It carries out the reaction (2S,6S)-2,6-diaminopimelate = meso-2,6-diaminopimelate. Its pathway is amino-acid biosynthesis; L-lysine biosynthesis via DAP pathway; DL-2,6-diaminopimelate from LL-2,6-diaminopimelate: step 1/1. Its function is as follows. Catalyzes the stereoinversion of LL-2,6-diaminopimelate (L,L-DAP) to meso-diaminopimelate (meso-DAP), a precursor of L-lysine and an essential component of the bacterial peptidoglycan. The chain is Diaminopimelate epimerase from Leptospira interrogans serogroup Icterohaemorrhagiae serovar copenhageni (strain Fiocruz L1-130).